We begin with the raw amino-acid sequence, 563 residues long: 2-isopropylmalate synthase (563 aa).

Residues 31-305 form the Pyruvate carboxyltransferase domain; it reads PIWMSTDLRD…DPGLDFAQIN (275 aa). Asp40, His244, His246, and Asn280 together coordinate Mg(2+). Residues 437–563 form a regulatory domain region; it reads RAEPIEYLSH…EWARLCGGAE (127 aa).

Belongs to the alpha-IPM synthase/homocitrate synthase family. LeuA type 2 subfamily. In terms of assembly, homodimer. Mg(2+) is required as a cofactor.

It is found in the cytoplasm. It catalyses the reaction 3-methyl-2-oxobutanoate + acetyl-CoA + H2O = (2S)-2-isopropylmalate + CoA + H(+). It participates in amino-acid biosynthesis; L-leucine biosynthesis; L-leucine from 3-methyl-2-oxobutanoate: step 1/4. Functionally, catalyzes the condensation of the acetyl group of acetyl-CoA with 3-methyl-2-oxobutanoate (2-ketoisovalerate) to form 3-carboxy-3-hydroxy-4-methylpentanoate (2-isopropylmalate). The chain is 2-isopropylmalate synthase from Parvibaculum lavamentivorans (strain DS-1 / DSM 13023 / NCIMB 13966).